A 245-amino-acid polypeptide reads, in one-letter code: Thiopurine S-methyltransferase (245 aa).

Position 14 is a phosphoserine (serine 14). 29–40 contributes to the S-adenosyl-L-methionine binding site; it reads WQDKWVNGKTAF. Phenylalanine 40 provides a ligand contact to substrate. Lysine 58 is modified (N6-acetyllysine). Residues leucine 69, glutamate 90, 134–135, and arginine 152 each bind S-adenosyl-L-methionine; that span reads SI.

This sequence belongs to the class I-like SAM-binding methyltransferase superfamily. TPMT family. As to quaternary structure, monomer.

The protein localises to the cytoplasm. The catalysed reaction is S-adenosyl-L-methionine + a thiopurine = S-adenosyl-L-homocysteine + a thiopurine S-methylether.. The sequence is that of Thiopurine S-methyltransferase (TPMT) from Gorilla gorilla gorilla (Western lowland gorilla).